The chain runs to 494 residues: Aspartyl/glutamyl-tRNA(Asn/Gln) amidotransferase subunit B (494 aa).

It belongs to the GatB/GatE family. GatB subfamily. In terms of assembly, heterotrimer of A, B and C subunits.

The catalysed reaction is L-glutamyl-tRNA(Gln) + L-glutamine + ATP + H2O = L-glutaminyl-tRNA(Gln) + L-glutamate + ADP + phosphate + H(+). It catalyses the reaction L-aspartyl-tRNA(Asn) + L-glutamine + ATP + H2O = L-asparaginyl-tRNA(Asn) + L-glutamate + ADP + phosphate + 2 H(+). Functionally, allows the formation of correctly charged Asn-tRNA(Asn) or Gln-tRNA(Gln) through the transamidation of misacylated Asp-tRNA(Asn) or Glu-tRNA(Gln) in organisms which lack either or both of asparaginyl-tRNA or glutaminyl-tRNA synthetases. The reaction takes place in the presence of glutamine and ATP through an activated phospho-Asp-tRNA(Asn) or phospho-Glu-tRNA(Gln). This Rhodopseudomonas palustris (strain HaA2) protein is Aspartyl/glutamyl-tRNA(Asn/Gln) amidotransferase subunit B.